A 373-amino-acid polypeptide reads, in one-letter code: Chorismate synthase (373 aa).

NADP(+) is bound at residue arginine 46. FMN contacts are provided by residues 123 to 125 (RSS), 250 to 251 (NA), glycine 295, 310 to 314 (KPTPS), and arginine 337.

Belongs to the chorismate synthase family. It depends on FMNH2 as a cofactor.

It carries out the reaction 5-O-(1-carboxyvinyl)-3-phosphoshikimate = chorismate + phosphate. It participates in metabolic intermediate biosynthesis; chorismate biosynthesis; chorismate from D-erythrose 4-phosphate and phosphoenolpyruvate: step 7/7. Functionally, catalyzes the anti-1,4-elimination of the C-3 phosphate and the C-6 proR hydrogen from 5-enolpyruvylshikimate-3-phosphate (EPSP) to yield chorismate, which is the branch point compound that serves as the starting substrate for the three terminal pathways of aromatic amino acid biosynthesis. This reaction introduces a second double bond into the aromatic ring system. This Methanococcus aeolicus (strain ATCC BAA-1280 / DSM 17508 / OCM 812 / Nankai-3) protein is Chorismate synthase.